Here is a 264-residue protein sequence, read N- to C-terminus: Secretory carrier-associated membrane protein 4 (264 aa).

Residues 1-33 (MNRHHDPNPFDEDEEIVNPFSKGGGRVPAASRP) are disordered. Residues 1–122 (MNRHHDPNPF…AQKLQYLAFA (122 aa)) lie on the Cytoplasmic side of the membrane. A coiled-coil region spans residues 51 to 85 (MNDSSQKQRKLADWEAELRKKEMDIKRREEAIAKF). The next 4 helical transmembrane spans lie at 123–143 (SWLGIVLCLVFNVIATMVCWI), 150–170 (IFFLATIYALIGCPLSYVLWY), 185–205 (FGWFFFTYLIHIGFCIVAAIA), and 233–253 (IFYFIGFGLFCLESLLSLWVL). Topologically, residues 254–264 (QKIYLYFRGNK) are cytoplasmic.

This sequence belongs to the SCAMP family.

The protein resides in the cell membrane. The protein localises to the cytoplasmic vesicle. Its subcellular location is the secretory vesicle membrane. In terms of biological role, probably involved in membrane trafficking. This is Secretory carrier-associated membrane protein 4 (SCAMP4) from Arabidopsis thaliana (Mouse-ear cress).